We begin with the raw amino-acid sequence, 251 residues long: tRNA (guanine-N(1)-)-methyltransferase (251 aa).

Residues Gly-122 and Ile-142–Leu-147 contribute to the S-adenosyl-L-methionine site. The interval Arg-226–Gly-251 is disordered. The segment covering Pro-237–Gly-251 has biased composition (polar residues).

The protein belongs to the RNA methyltransferase TrmD family. In terms of assembly, homodimer.

It localises to the cytoplasm. It catalyses the reaction guanosine(37) in tRNA + S-adenosyl-L-methionine = N(1)-methylguanosine(37) in tRNA + S-adenosyl-L-homocysteine + H(+). Functionally, specifically methylates guanosine-37 in various tRNAs. The sequence is that of tRNA (guanine-N(1)-)-methyltransferase from Rhodopseudomonas palustris (strain BisB18).